We begin with the raw amino-acid sequence, 1238 residues long: Kinesin-related protein 10 (1238 aa).

The Kinesin motor domain maps to 16–374; it reads SMIVTVRIRP…LKYAQRAKSI (359 aa). 116–123 provides a ligand contact to ATP; sequence GASGAGKT. Low complexity predominate over residues 417-436; the sequence is NNNNSNNNNNNNNNNYFSNS. The segment at 417 to 503 is disordered; sequence NNNNSNNNNN…DGEDSNNRDN (87 aa). Positions 437–464 are enriched in polar residues; sequence FGSCGNKNQPIKQPTPPTSLFHQQNQKY. Positions 468-497 are enriched in acidic residues; the sequence is DDDDDDDNDQEENNDEVLINEDDEEVDGED. The stretch at 527-602 forms a coiled coil; that stretch reads TLKKTQSIQR…NNQWRRKLQS (76 aa). Low complexity-rich tracts occupy residues 726–795, 918–934, and 961–971; these read NDIN…NIIN, LLPSTTTATTTTLSSPL, and NNNNNNNNIAP. Disordered stretches follow at residues 726–802, 891–971, 1134–1156, and 1191–1238; these read NDIN…LKPR, EIDD…NIAP, TPTSTISSSISTRPITTSTTTST, and ATLT…KIIK. Residues 1191–1203 show a composition bias toward polar residues; sequence ATLTPNRNNSQIV. The segment covering 1215–1228 has biased composition (low complexity); the sequence is PTSSSSRLLPSSRT. Positions 1229-1238 are enriched in polar residues; it reads TVNTSRKIIK.

Belongs to the TRAFAC class myosin-kinesin ATPase superfamily. Kinesin family.

It localises to the cytoplasm. The protein resides in the cytoskeleton. Functionally, microtubule-associated force-producing protein that plays a role in organelle transport. Its motor activity is directed toward the microtubule's plus end. Cooperates with kif8 and dynein to organize interphase microtubules. The protein is Kinesin-related protein 10 (kif10) of Dictyostelium discoideum (Social amoeba).